The following is a 124-amino-acid chain: Large ribosomal subunit protein bL12 (124 aa).

This sequence belongs to the bacterial ribosomal protein bL12 family. As to quaternary structure, homodimer. Part of the ribosomal stalk of the 50S ribosomal subunit. Forms a multimeric L10(L12)X complex, where L10 forms an elongated spine to which 2 to 4 L12 dimers bind in a sequential fashion. Binds GTP-bound translation factors.

Its function is as follows. Forms part of the ribosomal stalk which helps the ribosome interact with GTP-bound translation factors. Is thus essential for accurate translation. In Aromatoleum aromaticum (strain DSM 19018 / LMG 30748 / EbN1) (Azoarcus sp. (strain EbN1)), this protein is Large ribosomal subunit protein bL12.